Consider the following 208-residue polypeptide: MKKLFSAKLFSALVLSFSLFSTAHAASPKDELNKRLSMNGGFSADFSQQVISPEGETVMEGEGTVEIARPSLFRWSTTSPDENLLVSDGKTLWYYSPFIEQVSIYWQEQATEQTPFVLLTRNRASDWDNYKISQKGDQFTLIPTAVDSTQGQFQINIDAKGVVKGFNVVEQDGQKGLFTFNNVKLGKPKADRFTFTIPNGVEVDDQRN.

The signal sequence occupies residues 1 to 25 (MKKLFSAKLFSALVLSFSLFSTAHA).

This sequence belongs to the LolA family. In terms of assembly, monomer.

It is found in the periplasm. Participates in the translocation of lipoproteins from the inner membrane to the outer membrane. Only forms a complex with a lipoprotein if the residue after the N-terminal Cys is not an aspartate (The Asp acts as a targeting signal to indicate that the lipoprotein should stay in the inner membrane). The protein is Outer-membrane lipoprotein carrier protein of Vibrio campbellii (strain ATCC BAA-1116).